A 415-amino-acid chain; its full sequence is Putative serine/threonine-protein phosphatase 4 regulatory subunit 1-like (415 aa).

4 HEAT repeats span residues Val86–Pro124, Leu163–Phe202, Leu203–Gln241, and Leu242–Leu280. The segment covering Phe301–Ser318 has biased composition (low complexity). The interval Phe301–Cys362 is disordered.

Functionally, may be a regulatory subunit of serine/threonine-protein phosphatase 4. The sequence is that of Putative serine/threonine-protein phosphatase 4 regulatory subunit 1-like (PPP4R1L) from Homo sapiens (Human).